The sequence spans 160 residues: MRRVMVLFGVVIAGVKGFMLTLVSMFRPKVTLRYPSEKGPLSTRFRGEHALRRYDDGEERCIACKLCEAICPAQAITIEAAERGDGSRRTVRYDIDMTKCIYCGFCQEACPVDAIVEGPNFEYATETREELMYNKEKLLCNGDVWEEALDFRIRKNRPYY.

2 consecutive 4Fe-4S ferredoxin-type domains span residues 51–81 (LRRYDDGEERCIACKLCEAICPAQAITIEAA) and 91–120 (VRYDIDMTKCIYCGFCQEACPVDAIVEGPN). Positions 61, 64, 67, 71, 100, 103, 106, and 110 each coordinate [4Fe-4S] cluster.

It belongs to the complex I 23 kDa subunit family. In terms of assembly, NDH-1 is composed of 14 different subunits. Subunits NuoA, H, J, K, L, M, N constitute the membrane sector of the complex. It depends on [4Fe-4S] cluster as a cofactor.

The protein resides in the cell inner membrane. The enzyme catalyses a quinone + NADH + 5 H(+)(in) = a quinol + NAD(+) + 4 H(+)(out). NDH-1 shuttles electrons from NADH, via FMN and iron-sulfur (Fe-S) centers, to quinones in the respiratory chain. The immediate electron acceptor for the enzyme in this species is believed to be ubiquinone. Couples the redox reaction to proton translocation (for every two electrons transferred, four hydrogen ions are translocated across the cytoplasmic membrane), and thus conserves the redox energy in a proton gradient. The sequence is that of NADH-quinone oxidoreductase subunit I from Anaplasma marginale (strain St. Maries).